The following is a 113-amino-acid chain: MTTVITRLYADEKTACDIARQLKSEGIPKRALKVVVADGKKGAALAEALKSAGVHPSAAAGYAERVAGGLPLVAKVNYKPLGAAKLVRAITARARWSRSRTQPKSSPVRTHLK.

In terms of biological role, seems to be required for the LH-II stabilization. This chain is Protein PucD (pucD), found in Rhodobacter capsulatus (Rhodopseudomonas capsulata).